Here is a 170-residue protein sequence, read N- to C-terminus: Adenine phosphoribosyltransferase (170 aa).

The protein belongs to the purine/pyrimidine phosphoribosyltransferase family. Homodimer.

The protein localises to the cytoplasm. It catalyses the reaction AMP + diphosphate = 5-phospho-alpha-D-ribose 1-diphosphate + adenine. Its pathway is purine metabolism; AMP biosynthesis via salvage pathway; AMP from adenine: step 1/1. Catalyzes a salvage reaction resulting in the formation of AMP, that is energically less costly than de novo synthesis. The sequence is that of Adenine phosphoribosyltransferase from Clostridioides difficile (strain 630) (Peptoclostridium difficile).